The sequence spans 102 residues: MAKQKIRIRLKAYDHRVLDQSAEKIVETAKRSGASVSGPIPLPTEKSVYTILRAVHKYKDSREQFEMRTHKRLIDIINPTPQTVDALMRLDLPSGVDIEIKL.

The protein belongs to the universal ribosomal protein uS10 family. Part of the 30S ribosomal subunit.

In terms of biological role, involved in the binding of tRNA to the ribosomes. The chain is Small ribosomal subunit protein uS10 from Shouchella clausii (strain KSM-K16) (Alkalihalobacillus clausii).